Here is a 69-residue protein sequence, read N- to C-terminus: Cytochrome c oxidase subunit 8A, mitochondrial (69 aa).

The transit peptide at 1-25 (MSVLTPLLLRGLTGSARRLPVPRAK) directs the protein to the mitochondrion. The SIFI-degron motif lies at 2–19 (SVLTPLLLRGLTGSARRL). Residues 26-36 (IHSLPPEGKLG) are Mitochondrial matrix-facing. The helical transmembrane segment at 37-60 (IMELAVGLTSCFVTFLLPAGWILS) threads the bilayer. At 61 to 69 (HLETYRRPE) the chain is on the mitochondrial intermembrane side.

This sequence belongs to the cytochrome c oxidase VIII family. Component of the cytochrome c oxidase (complex IV, CIV), a multisubunit enzyme composed of 14 subunits. The complex is composed of a catalytic core of 3 subunits MT-CO1, MT-CO2 and MT-CO3, encoded in the mitochondrial DNA, and 11 supernumerary subunits COX4I1 (or COX4I2), COX5A, COX5B, COX6A1 (or COX6A2), COX6B1 (or COX6B2), COX6C, COX7A2 (or COX7A1), COX7B, COX7C, COX8A and NDUFA4, which are encoded in the nuclear genome. The complex exists as a monomer or a dimer and forms supercomplexes (SCs) in the inner mitochondrial membrane with NADH-ubiquinone oxidoreductase (complex I, CI) and ubiquinol-cytochrome c oxidoreductase (cytochrome b-c1 complex, complex III, CIII), resulting in different assemblies (supercomplex SCI(1)III(2)IV(1) and megacomplex MCI(2)III(2)IV(2)). Post-translationally, in response to mitochondrial stress, the precursor protein is ubiquitinated by the SIFI complex in the cytoplasm before mitochondrial import, leading to its degradation. Within the SIFI complex, UBR4 initiates ubiquitin chain that are further elongated or branched by KCMF1. As to expression, widely expressed.

It is found in the mitochondrion inner membrane. Its pathway is energy metabolism; oxidative phosphorylation. In terms of biological role, component of the cytochrome c oxidase, the last enzyme in the mitochondrial electron transport chain which drives oxidative phosphorylation. The respiratory chain contains 3 multisubunit complexes succinate dehydrogenase (complex II, CII), ubiquinol-cytochrome c oxidoreductase (cytochrome b-c1 complex, complex III, CIII) and cytochrome c oxidase (complex IV, CIV), that cooperate to transfer electrons derived from NADH and succinate to molecular oxygen, creating an electrochemical gradient over the inner membrane that drives transmembrane transport and the ATP synthase. Cytochrome c oxidase is the component of the respiratory chain that catalyzes the reduction of oxygen to water. Electrons originating from reduced cytochrome c in the intermembrane space (IMS) are transferred via the dinuclear copper A center (CU(A)) of subunit 2 and heme A of subunit 1 to the active site in subunit 1, a binuclear center (BNC) formed by heme A3 and copper B (CU(B)). The BNC reduces molecular oxygen to 2 water molecules using 4 electrons from cytochrome c in the IMS and 4 protons from the mitochondrial matrix. The polypeptide is Cytochrome c oxidase subunit 8A, mitochondrial (COX8A) (Homo sapiens (Human)).